The sequence spans 96 residues: UPF0235 protein CKO_04329 (96 aa).

Belongs to the UPF0235 family.

The sequence is that of UPF0235 protein CKO_04329 from Citrobacter koseri (strain ATCC BAA-895 / CDC 4225-83 / SGSC4696).